Consider the following 382-residue polypeptide: D-alanine--D-alanine ligase (382 aa).

Positions 139–348 (KRLMRDAGLP…PPALMDALIA (210 aa)) constitute an ATP-grasp domain. 168–223 (EALESRTLFVKPANMGSSVGVSRVADAGQFDQALAHAFAYDEKILIERAVPRAREI) is a binding site for ATP. The Mg(2+) site is built by Asp-300, Glu-315, and Asn-317.

This sequence belongs to the D-alanine--D-alanine ligase family. It depends on Mg(2+) as a cofactor. Requires Mn(2+) as cofactor.

It localises to the cytoplasm. The enzyme catalyses 2 D-alanine + ATP = D-alanyl-D-alanine + ADP + phosphate + H(+). It functions in the pathway cell wall biogenesis; peptidoglycan biosynthesis. In terms of biological role, cell wall formation. This chain is D-alanine--D-alanine ligase, found in Methylobacterium sp. (strain 4-46).